The following is a 118-amino-acid chain: Large ribosomal subunit protein bL17 (118 aa).

This sequence belongs to the bacterial ribosomal protein bL17 family. In terms of assembly, part of the 50S ribosomal subunit. Contacts protein L32.

The sequence is that of Large ribosomal subunit protein bL17 from Thermus thermophilus (strain ATCC BAA-163 / DSM 7039 / HB27).